The sequence spans 207 residues: Glycerol-3-phosphate acyltransferase (207 aa).

5 helical membrane-spanning segments follow: residues 3–23, 54–74, 81–101, 122–142, and 158–178; these read LIGL…VWVG, TIVM…PIVF, GTAT…VSIF, PIMF…TSIV, and LVFQ…FVFY.

Belongs to the PlsY family. As to quaternary structure, probably interacts with PlsX.

The protein resides in the cell membrane. It catalyses the reaction an acyl phosphate + sn-glycerol 3-phosphate = a 1-acyl-sn-glycero-3-phosphate + phosphate. It participates in lipid metabolism; phospholipid metabolism. In terms of biological role, catalyzes the transfer of an acyl group from acyl-phosphate (acyl-PO(4)) to glycerol-3-phosphate (G3P) to form lysophosphatidic acid (LPA). This enzyme utilizes acyl-phosphate as fatty acyl donor, but not acyl-CoA or acyl-ACP. The sequence is that of Glycerol-3-phosphate acyltransferase from Levilactobacillus brevis (strain ATCC 367 / BCRC 12310 / CIP 105137 / JCM 1170 / LMG 11437 / NCIMB 947 / NCTC 947) (Lactobacillus brevis).